A 156-amino-acid polypeptide reads, in one-letter code: Interleukin-36 receptor antagonist protein (156 aa).

Cysteines 9 and 155 form a disulfide.

It belongs to the IL-1 family. As to quaternary structure, interacts with cargo receptor TMED10; the interaction mediates the translocation from the cytoplasm into the ERGIC (endoplasmic reticulum-Golgi intermediate compartment) and thereby secretion. In terms of processing, removal of N-terminal methionine is necessary for full antagonistic activity. In terms of tissue distribution, highly abundant in embryonic tissue and tissues containing epithelial cells.

It is found in the cytoplasm. The protein resides in the secreted. Its function is as follows. Inhibits the activity of interleukin-36 (IL36A,IL36B and IL36G) by binding to receptor IL1RL2/IL-36R and preventing its association with the coreceptor IL1RAP for signaling. Part of the IL-36 signaling system that is thought to be present in epithelial barriers and to take part in local inflammatory response; similar to the IL-1 system with which it shares the coreceptor. Proposed to play a role in skin inflammation. May be involved in the innate immune response to fungal pathogens. May activate an anti-inflammatory signaling pathway by recruiting SIGIRR. The polypeptide is Interleukin-36 receptor antagonist protein (Mus musculus (Mouse)).